A 1123-amino-acid chain; its full sequence is Ubiquitin carboxyl-terminal hydrolase 36 (1123 aa).

Basic and acidic residues-rich tracts occupy residues 1–19 (MPIV…KDSA) and 69–90 (GASR…EHTY). Disordered regions lie at residues 1–22 (MPIV…ADDG) and 67–95 (TEGA…SCGD). The USP domain occupies 122 to 423 (AGLHNLGNTC…QAYVLFYLRI (302 aa)). Catalysis depends on cysteine 131, which acts as the Nucleophile. The active-site Proton acceptor is histidine 382. Serine 429 and serine 464 each carry phosphoserine. Residues 430 to 577 (PEGLISRTGS…RQGSWDSRDV (148 aa)) form a disordered region. Polar residues predominate over residues 491–503 (RNGSTLGLKSQNG). Over residues 510–519 (PSGSPSPKLS) the composition is skewed to low complexity. Serine 546 is subject to Phosphoserine. The segment covering 557 to 571 (SNSNSSRSGSQRQGS) has biased composition (low complexity). A Phosphoserine modification is found at serine 582. The disordered stretch occupies residues 589–999 (ATANGHGLKG…ESSSCAPSAN (411 aa)). Over residues 597-609 (KGNDESAGLDRRG) the composition is skewed to basic and acidic residues. The segment covering 610-623 (SSSSSPEHSASSDS) has biased composition (low complexity). A compositionally biased stretch (polar residues) spans 640–654 (SQETNCSTAGHSKTP). The residue at position 667 (serine 667) is a Phosphoserine. A compositionally biased stretch (polar residues) spans 669 to 681 (VLSNTTTEPASTM). Residue serine 682 is modified to Phosphoserine. The span at 687–697 (KKLALSAKKAS) shows a compositional bias: low complexity. Residues serine 713 and serine 742 each carry the phosphoserine modification. Residues 773 to 785 (EPRSCSSISTALP) are compositionally biased toward polar residues. Basic residues predominate over residues 841-850 (HGKRKRKKKK). Over residues 891 to 902 (GTQPQVNGQQVG) the composition is skewed to polar residues. A Phosphoserine modification is found at serine 952. Basic and acidic residues predominate over residues 963–975 (QETQRAVEEDGHL).

This sequence belongs to the peptidase C19 family. In terms of assembly, interacts with isoform 3 of FBXW7; the interaction inhibits MYC degradation induced by SCF(FBW7) complex. Interacts with NTRK1; USP36 does not deubiquitinate NTRK1. Interacts with NEDD4L (via domains WW1, 3 and 4); the interaction inhibits ubiquitination of, at least, NTRK1, KCNQ2 and KCNQ3 by NEDD4L. Interacts (via C-terminus) with EXOSC10 (via C-terminus); the interaction is facilitated by the association with RNA and promotes sumoylation of EXOSC10. In terms of processing, polyubiquitinated by NEDD4L, no effect on USP36 protein levels. Both proteins interact with and regulate each other's ubiquitination levels. In terms of tissue distribution, broadly expressed.

It is found in the nucleus. It localises to the nucleolus. The protein localises to the cytoplasm. It catalyses the reaction Thiol-dependent hydrolysis of ester, thioester, amide, peptide and isopeptide bonds formed by the C-terminal Gly of ubiquitin (a 76-residue protein attached to proteins as an intracellular targeting signal).. Deubiquitinase essential for the regulation of nucleolar structure and function. Required for cell and organism viability. Plays an important role in ribosomal RNA processing and protein synthesis, which is mediated, at least in part, through deubiquitination of DHX33, NPM1 and FBL, regulating their protein stability. Functions as a transcriptional repressor by deubiquiting histone H2B at the promoters of genes critical for cellular differentiation, such as CDKN1A, thereby preventing histone H3 'Lys-4' trimethylation (H3K4). Specifically deubiquitinates MYC in the nucleolus, leading to prevent MYC degradation by the proteasome: acts by specifically interacting with isoform 3 of FBXW7 (FBW7gamma) in the nucleolus and counteracting ubiquitination of MYC by the SCF(FBW7) complex. In contrast, it does not interact with isoform 1 of FBXW7 (FBW7alpha) in the nucleoplasm. Interacts to and regulates the actions of E3 ubiquitin-protein ligase NEDD4L over substrates such as NTRK1, KCNQ2 and KCNQ3, affecting their expression an functions. Deubiquitinates SOD2, regulates SOD2 protein stability. Deubiquitinase activity is required to control selective autophagy activation by ubiquitinated proteins. Promotes CEP63 stabilization through 'Lys-48'-linked deubiquitination leading to increased stability. Acts as a SUMO ligase to promote EXOSC10 sumoylation critical for the nucleolar RNA exosome function in rRNA processing. Binds to pre-rRNAs. The protein is Ubiquitin carboxyl-terminal hydrolase 36 of Homo sapiens (Human).